The following is a 241-amino-acid chain: Adenosylcobinamide-GDP ribazoletransferase (241 aa).

Helical transmembrane passes span Arg34 to Ser54, Phe55 to Leu75, Val109 to Thr129, Pro133 to Phe153, Met165 to Leu185, Leu186 to Ile206, and Val221 to Ile241.

This sequence belongs to the CobS family. Mg(2+) serves as cofactor.

Its subcellular location is the cell inner membrane. It carries out the reaction alpha-ribazole + adenosylcob(III)inamide-GDP = adenosylcob(III)alamin + GMP + H(+). It catalyses the reaction alpha-ribazole 5'-phosphate + adenosylcob(III)inamide-GDP = adenosylcob(III)alamin 5'-phosphate + GMP + H(+). The protein operates within cofactor biosynthesis; adenosylcobalamin biosynthesis; adenosylcobalamin from cob(II)yrinate a,c-diamide: step 7/7. In terms of biological role, joins adenosylcobinamide-GDP and alpha-ribazole to generate adenosylcobalamin (Ado-cobalamin). Also synthesizes adenosylcobalamin 5'-phosphate from adenosylcobinamide-GDP and alpha-ribazole 5'-phosphate. The polypeptide is Adenosylcobinamide-GDP ribazoletransferase (Fervidobacterium nodosum (strain ATCC 35602 / DSM 5306 / Rt17-B1)).